The primary structure comprises 213 residues: Uridine kinase (213 aa).

15 to 22 (GASASGKS) is an ATP binding site.

Belongs to the uridine kinase family.

Its subcellular location is the cytoplasm. The catalysed reaction is uridine + ATP = UMP + ADP + H(+). The enzyme catalyses cytidine + ATP = CMP + ADP + H(+). It functions in the pathway pyrimidine metabolism; CTP biosynthesis via salvage pathway; CTP from cytidine: step 1/3. The protein operates within pyrimidine metabolism; UMP biosynthesis via salvage pathway; UMP from uridine: step 1/1. In Escherichia coli O157:H7, this protein is Uridine kinase.